We begin with the raw amino-acid sequence, 57 residues long: Large ribosomal subunit protein bL32B (57 aa).

The protein belongs to the bacterial ribosomal protein bL32 family.

This chain is Large ribosomal subunit protein bL32B, found in Listeria welshimeri serovar 6b (strain ATCC 35897 / DSM 20650 / CCUG 15529 / CIP 8149 / NCTC 11857 / SLCC 5334 / V8).